The primary structure comprises 264 residues: MNDSLKAQCGAEFLGTGLFLFFGIGCLSALKVAGASLGLWEICIIWGLGISLAVYLTAGISGGHLNPAVTIALWLFACFPKQKVLPYIIAQFAGAFGGALLAYVLYSSLFTEFETAHHMVRGSVESLQLASIFSTYPAAALNVWQAALVEVVITSILMGMIMALTDDGNGIPKGPLAPLLIGILVAVIGASTGPLTGFAMNPARDFGPKLFTWLAGWGNMAMSGGREIPYFIVPIVAPVIGACAGAAIYRYFIGKNLPCNRCEL.

Transmembrane regions (helical) follow at residues 10–30 (GAEF…LSAL) and 42–62 (ICII…GISG). The short motif at 66 to 68 (NPA) is the NPA 1 element. A run of 3 helical transmembrane segments spans residues 84–104 (VLPY…LAYV), 143–163 (VWQA…MIMA), and 179–199 (LLIG…TGFA). The short motif at 201 to 203 (NPA) is the NPA 2 element. A helical transmembrane segment spans residues 228–248 (IPYFIVPIVAPVIGACAGAAI).

This sequence belongs to the MIP/aquaporin (TC 1.A.8) family.

Its subcellular location is the cell inner membrane. In terms of biological role, probably facilitates diffusion of 1,2-propanediol (1,2-PD) into the cell. Modeling suggests active transport of 1,2-PD is required at low extracellular concentrations to allow maximal growth and saturation of PduP/PduQ within the bacterial microcompartment (BMC); this protein may be the cellular transporter. Its function is as follows. The 1,2-PD-specific bacterial microcompartment (BMC) concentrates low levels of 1,2-PD catabolic enzymes, concentrates volatile reaction intermediates thus enhancing pathway flux and keeps the level of toxic, mutagenic propionaldehyde low. In Salmonella typhimurium (strain LT2 / SGSC1412 / ATCC 700720), this protein is Propanediol uptake facilitator PduF.